The chain runs to 497 residues: Probable malate:quinone oxidoreductase (497 aa).

It belongs to the MQO family. The cofactor is FAD.

The catalysed reaction is (S)-malate + a quinone = a quinol + oxaloacetate. It participates in carbohydrate metabolism; tricarboxylic acid cycle; oxaloacetate from (S)-malate (quinone route): step 1/1. The sequence is that of Probable malate:quinone oxidoreductase from Rhodopseudomonas palustris (strain ATCC BAA-98 / CGA009).